The sequence spans 138 residues: Ribosome-binding factor A (138 aa).

Residues 117–138 (AEDGQHQEGPASADAKPESTEE) are disordered.

The protein belongs to the RbfA family. As to quaternary structure, monomer. Binds 30S ribosomal subunits, but not 50S ribosomal subunits or 70S ribosomes.

The protein localises to the cytoplasm. Its function is as follows. One of several proteins that assist in the late maturation steps of the functional core of the 30S ribosomal subunit. Associates with free 30S ribosomal subunits (but not with 30S subunits that are part of 70S ribosomes or polysomes). Required for efficient processing of 16S rRNA. May interact with the 5'-terminal helix region of 16S rRNA. The protein is Ribosome-binding factor A of Pseudomonas syringae pv. syringae (strain B728a).